Reading from the N-terminus, the 633-residue chain is DNA topoisomerase 1 (633 aa).

In terms of domain architecture, Toprim spans Lys-6–Thr-115. 2 residues coordinate Mg(2+): Glu-12 and Asp-84. Residues Asp-130–Phe-543 enclose the Topo IA-type catalytic domain. Positions Ser-164–Gln-169 are interaction with DNA. Tyr-288 serves as the catalytic O-(5'-phospho-DNA)-tyrosine intermediate. 2 disulfides stabilise this stretch: Cys-559-Cys-578 and Cys-561-Cys-580. Residues Cys-559 to Cys-580 form a C4-type zinc finger. The interval Leu-601 to Ser-633 is disordered.

Belongs to the type IA topoisomerase family. In terms of assembly, monomer. Mg(2+) serves as cofactor.

It catalyses the reaction ATP-independent breakage of single-stranded DNA, followed by passage and rejoining.. Releases the supercoiling and torsional tension of DNA, which is introduced during the DNA replication and transcription, by transiently cleaving and rejoining one strand of the DNA duplex. Introduces a single-strand break via transesterification at a target site in duplex DNA. The scissile phosphodiester is attacked by the catalytic tyrosine of the enzyme, resulting in the formation of a DNA-(5'-phosphotyrosyl)-enzyme intermediate and the expulsion of a 3'-OH DNA strand. The free DNA strand then undergoes passage around the unbroken strand, thus removing DNA supercoils. Finally, in the religation step, the DNA 3'-OH attacks the covalent intermediate to expel the active-site tyrosine and restore the DNA phosphodiester backbone. The protein is DNA topoisomerase 1 of Thermotoga maritima (strain ATCC 43589 / DSM 3109 / JCM 10099 / NBRC 100826 / MSB8).